We begin with the raw amino-acid sequence, 458 residues long: Phosphoglucosamine mutase (458 aa).

Serine 106 functions as the Phosphoserine intermediate in the catalytic mechanism. Positions 106, 247, 249, and 251 each coordinate Mg(2+). Serine 106 carries the post-translational modification Phosphoserine.

The protein belongs to the phosphohexose mutase family. It depends on Mg(2+) as a cofactor. In terms of processing, activated by phosphorylation.

It carries out the reaction alpha-D-glucosamine 1-phosphate = D-glucosamine 6-phosphate. Its function is as follows. Catalyzes the conversion of glucosamine-6-phosphate to glucosamine-1-phosphate. The chain is Phosphoglucosamine mutase from Chlamydia felis (strain Fe/C-56) (Chlamydophila felis).